Reading from the N-terminus, the 430-residue chain is Histidine--tRNA ligase (430 aa).

The protein belongs to the class-II aminoacyl-tRNA synthetase family. As to quaternary structure, homodimer.

It localises to the cytoplasm. It carries out the reaction tRNA(His) + L-histidine + ATP = L-histidyl-tRNA(His) + AMP + diphosphate + H(+). In Lactococcus lactis subsp. cremoris (strain MG1363), this protein is Histidine--tRNA ligase.